Here is a 467-residue protein sequence, read N- to C-terminus: Ankyrin repeat and SOCS box protein 10 (467 aa).

ANK repeat units lie at residues 115-144 (ELTTPLHVAASRGHTEVLRLLLRRRARPDS), 147-176 (GGRTALHEACAAGHTACVHVLLVAGADPNI), 180-209 (DGKRPLHLCRGPGTLECAELLLRFGARVDG), 214-243 (EEETPLHVAARLGHVELADLLLRRGACPDA), 247-289 (EGWT…DADA), 293-322 (DKQRPLHLACRRGHAAVVELLLSCGVSANT), and 326-361 (GGHTPLHCALQGPAAALAQSPEHVVRALLNHGAVRV). Residues 412-464 (YSSLFALVRQPRSLQHLSRCALRSHLEGSLPQALPRLPLPPRLLRYLQLDFEG) enclose the SOCS box domain.

This sequence belongs to the ankyrin SOCS box (ASB) family. In terms of tissue distribution, expressed in the eye. The highest expression is observed in the iris, with moderate levels in the trabecular meshwork (TM), the lamina, and the optic nerve; slightly lower levels in the ciliary body, retina, and choroid; and very low levels in the lens.

The protein localises to the cytoplasm. It is found in the nucleus. Its pathway is protein modification; protein ubiquitination. Functionally, may be a substrate-recognition component of a SCF-like ECS (Elongin-Cullin-SOCS-box protein) E3 ubiquitin-protein ligase complex which mediates the ubiquitination and subsequent proteasomal degradation of target proteins. The polypeptide is Ankyrin repeat and SOCS box protein 10 (ASB10) (Homo sapiens (Human)).